We begin with the raw amino-acid sequence, 262 residues long: Global transcriptional regulator CodY (262 aa).

Positions methionine 1–leucine 159 are GAF domain. The segment at residues alanine 207–arginine 226 is a DNA-binding region (H-T-H motif).

It belongs to the CodY family.

Its subcellular location is the cytoplasm. Its function is as follows. DNA-binding global transcriptional regulator which is involved in the adaptive response to starvation and acts by directly or indirectly controlling the expression of numerous genes in response to nutrient availability. During rapid exponential growth, CodY is highly active and represses genes whose products allow adaptation to nutrient depletion. This is Global transcriptional regulator CodY from Streptococcus pneumoniae (strain JJA).